The sequence spans 357 residues: Peptide chain release factor 1 (357 aa).

Q236 is modified (N5-methylglutamine). A compositionally biased stretch (basic and acidic residues) spans 284–293; the sequence is RRKKDQERAN. The tract at residues 284-313 is disordered; the sequence is RRKKDQERANNRRKQIGSGDRSERIRTYNF.

Belongs to the prokaryotic/mitochondrial release factor family. Post-translationally, methylated by PrmC. Methylation increases the termination efficiency of RF1.

It is found in the cytoplasm. Peptide chain release factor 1 directs the termination of translation in response to the peptide chain termination codons UAG and UAA. The polypeptide is Peptide chain release factor 1 (Rickettsia bellii (strain RML369-C)).